A 200-amino-acid chain; its full sequence is Inner membrane protein E199L (200 aa).

An N-linked (GlcNAc...) asparagine; by host glycan is attached at N131. The chain crosses the membrane as a helical span at residues 150 to 170 (INVMNHPFLTLILIILILIII).

The protein belongs to the asfivirus E199L family. As to quaternary structure, interacts with host PYCR2; this interaction results in autophagy activation. Post-translationally, contains intramolecular disulfide bonds.

It localises to the virion membrane. Its subcellular location is the host membrane. Essential for viral fusion with host endosomal membrane and core release. Not required for virus morphogenesis and egress. Induces complete autophagy through the interaction with and down-regulation of host PYCR2. The polypeptide is Inner membrane protein E199L (Ornithodoros (relapsing fever ticks)).